A 72-amino-acid polypeptide reads, in one-letter code: MAKEENIEMQGTVLDTLPNTMFRVELENGHVVTAHISGKMRKNYIRILTGDKVTVELTPYDLSKGRIIFRAR.

The S1-like domain occupies 1–72 (MAKEENIEMQ…SKGRIIFRAR (72 aa)).

The protein belongs to the IF-1 family. In terms of assembly, component of the 30S ribosomal translation pre-initiation complex which assembles on the 30S ribosome in the order IF-2 and IF-3, IF-1 and N-formylmethionyl-tRNA(fMet); mRNA recruitment can occur at any time during PIC assembly.

The protein resides in the cytoplasm. One of the essential components for the initiation of protein synthesis. Stabilizes the binding of IF-2 and IF-3 on the 30S subunit to which N-formylmethionyl-tRNA(fMet) subsequently binds. Helps modulate mRNA selection, yielding the 30S pre-initiation complex (PIC). Upon addition of the 50S ribosomal subunit IF-1, IF-2 and IF-3 are released leaving the mature 70S translation initiation complex. This is Translation initiation factor IF-1 from Colwellia psychrerythraea (strain 34H / ATCC BAA-681) (Vibrio psychroerythus).